A 196-amino-acid chain; its full sequence is Aequorin-2 (196 aa).

A propeptide spanning residues 1–7 (MTSKQYS) is cleaved from the precursor. 4 consecutive EF-hand domains span residues 18–53 (RWIGRHKHMFNFLDVNHNGKISLDEMVYKASDIVIN), 54–108 (NLGA…AKNE), 117–146 (DALFDIVDKDQNGAITLDEWKAYTKAAGII), and 147–182 (QSSEDCEETFRVCDIDESGQLDVDEMTRQHLGFWYT). Residues Asp31, Asn33, Asn35, Lys37, and Glu42 each contribute to the Ca(2+) site. May interact with the chromophore regions lie at residues 47–57 (ASDIVINNLGA), 62–72 (AKRHKDAVEAF), and 107–117 (NEPTLIRIWGD). 9 residues coordinate Ca(2+): Asp124, Asp126, Asn128, Glu135, Asp160, Asp162, Ser164, Gln166, and Glu171.

Belongs to the aequorin family. The reduction of the disulfide bond is necessary to regenerate aequorin from apoaequorin.

Its function is as follows. Ca(2+)-dependent bioluminescence photoprotein. Displays an emission peak at 470 nm (blue light). Trace amounts of calcium ion trigger the intramolecular oxidation of the chromophore, coelenterazine into coelenteramide and CO(2) with the concomitant emission of light. The chain is Aequorin-2 from Aequorea victoria (Water jellyfish).